The following is a 123-amino-acid chain: Large ribosomal subunit protein uL14 (123 aa).

It belongs to the universal ribosomal protein uL14 family. In terms of assembly, part of the 50S ribosomal subunit. Forms a cluster with proteins L3 and L19. In the 70S ribosome, L14 and L19 interact and together make contacts with the 16S rRNA in bridges B5 and B8.

In terms of biological role, binds to 23S rRNA. Forms part of two intersubunit bridges in the 70S ribosome. The sequence is that of Large ribosomal subunit protein uL14 from Cronobacter sakazakii (strain ATCC BAA-894) (Enterobacter sakazakii).